The sequence spans 222 residues: Ribulose-phosphate 3-epimerase (222 aa).

Serine 7 serves as a coordination point for substrate. Histidine 32, aspartate 34, and histidine 65 together coordinate a divalent metal cation. Aspartate 34 functions as the Proton acceptor in the catalytic mechanism. Substrate contacts are provided by residues histidine 65, 141–144, 174–176, and 196–197; these read GFSG, DGG, and GS. Aspartate 174 lines the a divalent metal cation pocket. Residue aspartate 174 is the Proton donor of the active site.

Belongs to the ribulose-phosphate 3-epimerase family. The cofactor is a divalent metal cation.

It carries out the reaction D-ribulose 5-phosphate = D-xylulose 5-phosphate. Its pathway is carbohydrate degradation. Its function is as follows. Catalyzes the reversible epimerization of D-ribulose 5-phosphate to D-xylulose 5-phosphate. The chain is Ribulose-phosphate 3-epimerase from Aquifex aeolicus (strain VF5).